The primary structure comprises 313 residues: PDZ domain-containing protein GIPC2 (313 aa).

Basic and acidic residues predominate over residues 14-27 (KETSRLVEGEHTDA). Positions 14–34 (KETSRLVEGEHTDAAVRSLPS) are disordered. The region spanning 117–197 (EVNVYKSEDS…EELFTLTLIE (81 aa)) is the PDZ domain.

It belongs to the GIPC family. In terms of assembly, probably interacts with SEMA5A.

It is found in the cytoplasm. This chain is PDZ domain-containing protein GIPC2 (GIPC2), found in Bos taurus (Bovine).